The sequence spans 505 residues: Maturase K (505 aa).

It belongs to the intron maturase 2 family. MatK subfamily.

It is found in the plastid. The protein localises to the chloroplast. In terms of biological role, usually encoded in the trnK tRNA gene intron. Probably assists in splicing its own and other chloroplast group II introns. This Portulacaria afra (Elephant's food) protein is Maturase K.